Reading from the N-terminus, the 478-residue chain is Phosphatidylinositol 4-kinase type 2-alpha (478 aa).

Met1 is modified (N-acetylmethionine). The interval 1–57 (MDETSPLVSPERAQPPEYTFPSVSGAHFPQVPGGAVRVAAAGSGPSPPCSPGHDRER) is disordered. Ser5, Ser9, Ser43, Ser46, and Ser50 each carry phosphoserine. Positions 31 to 44 (VPGGAVRVAAAGSG) are enriched in low complexity. A PI3K/PI4K catalytic domain is found at 123–452 (SIYPERIYQG…VQMPPVIVET (330 aa)). The interval 129–135 (IYQGSSG) is G-loop. ATP-binding positions include 130-136 (YQGSSGS) and Lys151. Residues 156–158 (EPY) are important for substrate binding. The important for interaction with membranes stretch occupies residues 164 to 177 (KWTKWLQKLCCPCC). Residues Cys173, Cys174, Cys176, and Cys177 are each lipidated (S-palmitoyl cysteine). 260–263 (QLFV) lines the ATP pocket. The interval 267-275 (KDADYWLRR) is important for interaction with membranes. The tract at residues 304-312 (RNTDRGNDN) is catalytic loop. The tract at residues 343–363 (AIDNGLAFPLKHPDSWRAYPF) is activation loop. Residue Asp345 participates in ATP binding. The important for interaction with membranes stretch occupies residues 358 to 367 (WRAYPFYWAW). Residue Ser461 is modified to Phosphoserine.

The protein belongs to the PI3/PI4-kinase family. Type II PI4K subfamily. In terms of assembly, associates with the BLOC-1 and the AP-3 complexes; the BLOC-1 complex is required for optimal binding of PI4K2A to the AP-3 complex. Interacts with BLOC1S5 and DTNBP1. Interacts with FOS; this interaction may enhance phosphatidylinositol phosphorylation activity. Interacts with ITCH. Interacts with ATG9A. Ubiquitinated by ITCH; this does not lead to proteasomal degradation. In terms of processing, palmitoylated. Palmitoylated by ZDHHC3 and ZDHHC7 in the CCPCC motif. Palmitoylation is cholesterol-dependent, and required for TGN localization. Detected in adult brain, especially in neurons in the cerebellum, brain cortex, dorsal root ganglion and spinal cord (at protein level).

Its subcellular location is the golgi apparatus. It is found in the trans-Golgi network membrane. The protein resides in the membrane raft. It localises to the endosome. The protein localises to the endosome membrane. Its subcellular location is the cytoplasmic vesicle. It is found in the cell projection. The protein resides in the dendrite. It localises to the presynaptic cell membrane. The protein localises to the synapse. Its subcellular location is the synaptosome. It is found in the mitochondrion. The protein resides in the membrane. It localises to the cell membrane. The protein localises to the perikaryon. Its subcellular location is the neuron projection. The enzyme catalyses a 1,2-diacyl-sn-glycero-3-phospho-(1D-myo-inositol) + ATP = a 1,2-diacyl-sn-glycero-3-phospho-(1D-myo-inositol 4-phosphate) + ADP + H(+). Its function is as follows. Membrane-bound phosphatidylinositol-4 kinase (PI4-kinase) that catalyzes the phosphorylation of phosphatidylinositol (PI) to phosphatidylinositol 4-phosphate (PI4P), a lipid that plays important roles in endocytosis, Golgi function, protein sorting and membrane trafficking and is required for prolonged survival of neurons. Besides, phosphorylation of phosphatidylinositol (PI) to phosphatidylinositol 4-phosphate (PI4P) is the first committed step in the generation of phosphatidylinositol 4,5-bisphosphate (PIP2), a precursor of the second messenger inositol 1,4,5-trisphosphate (InsP3). This Rattus norvegicus (Rat) protein is Phosphatidylinositol 4-kinase type 2-alpha (Pi4k2a).